The chain runs to 157 residues: MSATRLDVPVVRLPHGMDLPLPEYATAASAGMDLVAAVPAEVPLVIAPGAWALVPTGLALELPEGMEAQVRPRSGLALKFGVTVLNAPGTIDADYRGEVGVILINHGREPFTVSRGMRIAQMVIAGVQQITLVETGNLGETARGVGGFGSTGLDRTP.

Residues 73–75 (RSG), Asn-86, and 90–92 (TID) each bind substrate.

Belongs to the dUTPase family. Requires Mg(2+) as cofactor.

It catalyses the reaction dUTP + H2O = dUMP + diphosphate + H(+). It functions in the pathway pyrimidine metabolism; dUMP biosynthesis; dUMP from dCTP (dUTP route): step 2/2. This enzyme is involved in nucleotide metabolism: it produces dUMP, the immediate precursor of thymidine nucleotides and it decreases the intracellular concentration of dUTP so that uracil cannot be incorporated into DNA. The chain is Deoxyuridine 5'-triphosphate nucleotidohydrolase from Azorhizobium caulinodans (strain ATCC 43989 / DSM 5975 / JCM 20966 / LMG 6465 / NBRC 14845 / NCIMB 13405 / ORS 571).